The following is a 152-amino-acid chain: Protein-export protein SecB (152 aa).

This sequence belongs to the SecB family. Homotetramer, a dimer of dimers. One homotetramer interacts with 1 SecA dimer.

The protein resides in the cytoplasm. Functionally, one of the proteins required for the normal export of preproteins out of the cell cytoplasm. It is a molecular chaperone that binds to a subset of precursor proteins, maintaining them in a translocation-competent state. It also specifically binds to its receptor SecA. In Verminephrobacter eiseniae (strain EF01-2), this protein is Protein-export protein SecB.